A 508-amino-acid polypeptide reads, in one-letter code: Histidine ammonia-lyase (508 aa).

The segment at residues 143 to 145 (ASG) is a cross-link (5-imidazolinone (Ala-Gly)). Position 144 is a 2,3-didehydroalanine (Ser) (serine 144).

It belongs to the PAL/histidase family. Post-translationally, contains an active site 4-methylidene-imidazol-5-one (MIO), which is formed autocatalytically by cyclization and dehydration of residues Ala-Ser-Gly.

The protein localises to the cytoplasm. The enzyme catalyses L-histidine = trans-urocanate + NH4(+). It functions in the pathway amino-acid degradation; L-histidine degradation into L-glutamate; N-formimidoyl-L-glutamate from L-histidine: step 1/3. This is Histidine ammonia-lyase from Anaeromyxobacter dehalogenans (strain 2CP-C).